The sequence spans 469 residues: Glutamine synthetase (469 aa).

Positions 14-99 constitute a GS beta-grasp domain; sequence NDVKFVDLRF…FCDILDPVSG (86 aa). In terms of domain architecture, GS catalytic spans 106–469; the sequence is PRGTAKKAEA…PVEFDMYYSV (364 aa). Residues Glu-131 and Glu-133 each contribute to the Mg(2+) site. Glu-209 contributes to the ATP binding site. 2 residues coordinate Mg(2+): Glu-214 and Glu-221. Residues 265–266 and Gly-266 each bind L-glutamate; that span reads NG. His-270 provides a ligand contact to Mg(2+). ATP contacts are provided by residues 272-274 and Ser-274; that span reads HLS. Residues Arg-322, Glu-328, and Arg-340 each contribute to the L-glutamate site. ATP-binding residues include Arg-340, Arg-345, and Lys-353. Glu-358 contacts Mg(2+). L-glutamate is bound at residue Arg-360. Tyr-398 bears the O-AMP-tyrosine mark.

It belongs to the glutamine synthetase family. Oligomer of 12 subunits arranged in the form of two hexameric ring. Requires Mg(2+) as cofactor.

Its subcellular location is the cytoplasm. It catalyses the reaction L-glutamate + NH4(+) + ATP = L-glutamine + ADP + phosphate + H(+). Its activity is regulated as follows. The activity of this enzyme could be controlled by adenylation under conditions of abundant glutamine. Catalyzes the ATP-dependent biosynthesis of glutamine from glutamate and ammonia. This Rhizobium meliloti (strain 1021) (Ensifer meliloti) protein is Glutamine synthetase.